Consider the following 397-residue polypeptide: Multidrug resistance protein MdtH (397 aa).

10 helical membrane-spanning segments follow: residues 11 to 31 (WFLA…MPMI), 71 to 91 (FGAR…FASL), 94 to 114 (AQSG…GCLF), 137 to 157 (LLMM…SWLL), 163 to 183 (YVCL…LLIL), 211 to 231 (LVLI…IFPI), 242 to 262 (AVGW…YPLA), 291 to 311 (FATT…GIVI), 338 to 358 (LGLA…HDYA), and 366 to 386 (LPWL…VNCF).

Belongs to the major facilitator superfamily. DHA1 family. MdtH (TC 2.A.1.2.21) subfamily.

It localises to the cell inner membrane. This Aeromonas salmonicida (strain A449) protein is Multidrug resistance protein MdtH.